We begin with the raw amino-acid sequence, 517 residues long: Squalene epoxidase 6 (517 aa).

The next 2 membrane-spanning stretches (helical) occupy residues Phe-3–Leu-23 and Ala-45–Ala-65. FAD contacts are provided by residues Val-55–Gly-56, Glu-75–Arg-76, Arg-83, Phe-88, Arg-156, Val-172, Asp-336, and Met-349. A helical membrane pass occupies residues Leu-447–Pro-467.

Belongs to the squalene monooxygenase family. Requires FAD as cofactor. In terms of tissue distribution, expressed in seedlings, leaves, stems, inflorescences and siliques.

It localises to the membrane. The enzyme catalyses squalene + reduced [NADPH--hemoprotein reductase] + O2 = (S)-2,3-epoxysqualene + oxidized [NADPH--hemoprotein reductase] + H2O + H(+). It functions in the pathway terpene metabolism; lanosterol biosynthesis; lanosterol from farnesyl diphosphate: step 2/3. Catalyzes the stereospecific oxidation of squalene to (S)-2,3-epoxysqualene, and is considered to be a rate-limiting enzyme in steroid biosynthesis. In Arabidopsis thaliana (Mouse-ear cress), this protein is Squalene epoxidase 6 (SQE6).